Here is a 213-residue protein sequence, read N- to C-terminus: AN1-type zinc finger protein 5 (213 aa).

The segment at 8–42 adopts an A20-type zinc-finger fold; the sequence is TPGPMLCSTGCGFYGNPRTNGMCSVCYKEHLQRQQ. 4 residues coordinate Zn(2+): Cys14, Cys18, Cys30, and Cys33. Residues 39 to 149 are disordered; sequence QRQQNSGRMS…EEKAPELPKP (111 aa). The span at 40 to 75 shows a compositional bias: polar residues; sequence RQQNSGRMSPMGTASGSNSPTSDSASVQRADTSLNN. Ser48 and Ser58 each carry phosphoserine. Over residues 120–138 the composition is skewed to low complexity; the sequence is SEPVVTQPSPSVSQPSTSQ. Positions 139–148 are enriched in basic and acidic residues; the sequence is SEEKAPELPK. Residues 148–194 form an AN1-type zinc finger; it reads KPKKNRCFMCRKKVGLTGFDCRCGNLFCGLHRYSDKHNCPYDYKAEA. Zn(2+)-binding residues include Cys154, Cys157, Cys168, Cys170, Cys175, His178, His184, and Cys186. Lys209 carries the N6-acetyllysine modification.

Interacts with ubiquitin and polyubiquitinated proteins. Identified in a heterotrimeric complex with ubiquitin and SQSTM1, where ZFAND5 and SQSTM1 both interact with the same ubiquitin molecule. Homooligomer and/or heterooligomer. Interacts (via A20-type domain) with IKBKG and RIPK1 and with TRAF6 (via AN1-type domain). In terms of tissue distribution, highly expressed in skeletal muscle. Expressed in fetal cochlea. Also expressed in infant brain, fetal heart, pancreatic islet, melanocyte, pineal gland, placenta, corneal stroma, and parathyroid tumor. Weakly expressed or undetectable in adult brain, heart, colon, thymus, spleen, kidney, liver, small intestine, placenta, lung and peripheral blood leukocytes. Expressed in rhabdomyosarcoma RD cells (at protein level).

It localises to the cytoplasm. Functionally, involved in protein degradation via the ubiquitin-proteasome system. May act by anchoring ubiquitinated proteins to the proteasome. Plays a role in ubiquitin-mediated protein degradation during muscle atrophy. Plays a role in the regulation of NF-kappa-B activation and apoptosis. Inhibits NF-kappa-B activation triggered by overexpression of RIPK1 and TRAF6 but not of RELA. Also inhibits tumor necrosis factor (TNF), IL-1 and TLR4-induced NF-kappa-B activation in a dose-dependent manner. Overexpression sensitizes cells to TNF-induced apoptosis. Is a potent inhibitory factor for osteoclast differentiation. This Homo sapiens (Human) protein is AN1-type zinc finger protein 5 (ZFAND5).